A 385-amino-acid chain; its full sequence is Succinyl-diaminopimelate desuccinylase (385 aa).

A Zn(2+)-binding site is contributed by histidine 78. The active site involves aspartate 80. Residue aspartate 110 participates in Zn(2+) binding. The Proton acceptor role is filled by glutamate 144. Positions 145, 173, and 358 each coordinate Zn(2+).

This sequence belongs to the peptidase M20A family. DapE subfamily. Homodimer. Requires Zn(2+) as cofactor. The cofactor is Co(2+).

The catalysed reaction is N-succinyl-(2S,6S)-2,6-diaminopimelate + H2O = (2S,6S)-2,6-diaminopimelate + succinate. The protein operates within amino-acid biosynthesis; L-lysine biosynthesis via DAP pathway; LL-2,6-diaminopimelate from (S)-tetrahydrodipicolinate (succinylase route): step 3/3. Its function is as follows. Catalyzes the hydrolysis of N-succinyl-L,L-diaminopimelic acid (SDAP), forming succinate and LL-2,6-diaminopimelate (DAP), an intermediate involved in the bacterial biosynthesis of lysine and meso-diaminopimelic acid, an essential component of bacterial cell walls. The polypeptide is Succinyl-diaminopimelate desuccinylase (Gluconacetobacter diazotrophicus (strain ATCC 49037 / DSM 5601 / CCUG 37298 / CIP 103539 / LMG 7603 / PAl5)).